We begin with the raw amino-acid sequence, 554 residues long: Macrophage colony-stimulating factor 1 (554 aa).

The first 32 residues, 1–32, serve as a signal peptide directing secretion; sequence MTAPGAAGRCPPTTWLGSLLLLVCLLASRSIT. Topologically, residues 33–496 are lumenal; that stretch reads EEVSEYCSHM…GSFSPQLQES (464 aa). 3 disulfides stabilise this stretch: cysteine 39-cysteine 122, cysteine 80-cysteine 171, and cysteine 134-cysteine 178. N-linked (GlcNAc...) asparagine glycosylation is found at asparagine 154 and asparagine 172. The tract at residues 224–488 is disordered; the sequence is EDSEGTEGSS…TGHERQSEGS (265 aa). Position 266 is a phosphothreonine; by FAM20C (threonine 266). The O-linked (Xyl...) (chondroitin sulfate) serine glycan is linked to serine 309. A compositionally biased stretch (low complexity) spans 344–354; it reads LSASSPLPASA. O-linked (GalNAc...) threonine glycans are attached at residues threonine 363 and threonine 365. Polar residues predominate over residues 404–433; it reads RISSLRPQGLSNPSTLSAQPQLSRSHSSGS. The interval 406–426 is O-glycosylated at one site; that stretch reads SSLRPQGLSNPSTLSAQPQLS. Residues 440 to 453 show a composition bias toward basic and acidic residues; it reads LEGRRSTRDRRSPA. Residues 497 to 517 traverse the membrane as a helical segment; it reads VFHLLVPSVILVLLAVGGLLF. The Cytoplasmic portion of the chain corresponds to 518–554; it reads YRWRRRSHQEPQRADSPLEQPEGSPLTQDDRQVELPV. The segment at 526–554 is disordered; sequence QEPQRADSPLEQPEGSPLTQDDRQVELPV. Positions 545-554 are enriched in basic and acidic residues; the sequence is QDDRQVELPV.

As to quaternary structure, homodimer or heterodimer; disulfide-linked. Likely to exist in multiple forms: homodimer consisting of 2 identical 150-200 kDa proteoglycan subunits, heterodimer consisting of a 150-200 kDa proteoglycan subunit and a truncated 43 kDa subunit, and homodimer consisting of 2 identical 43 kDa subunits. Interacts with CSF1R. In terms of processing, N-glycosylated. O-glycosylated; contains chondroitin sulfate. O-glycosylated with core 1 or possibly core 8 glycans. Post-translationally, O-glycosylated.

The protein resides in the cell membrane. The protein localises to the secreted. It localises to the extracellular space. Its function is as follows. Cytokine that plays an essential role in the regulation of survival, proliferation and differentiation of hematopoietic precursor cells, especially mononuclear phagocytes, such as macrophages and monocytes. Promotes the release of pro-inflammatory chemokines, and thereby plays an important role in innate immunity and in inflammatory processes. Plays an important role in the regulation of osteoclast proliferation and differentiation, the regulation of bone resorption, and is required for normal bone development. Required for normal male and female fertility. Promotes reorganization of the actin cytoskeleton, regulates formation of membrane ruffles, cell adhesion and cell migration. Plays a role in lipoprotein clearance. This is Macrophage colony-stimulating factor 1 (CSF1) from Homo sapiens (Human).